The chain runs to 160 residues: SKP1-like protein 1A (160 aa).

The interval 102-160 is interaction with the F-box domain of F-box proteins; it reads ILAANYLNIKNLLDLTCQTVADMIKGKTPEEIRTTFNIKNDFTPEEEEEVRRENQWAFE.

This sequence belongs to the SKP1 family. As to quaternary structure, part of a SCF E3 ubiquitin ligase complex composed of SKP1, CUL1, RBX1 (RBX1A or RBX1B) and F-box proteins. Interacts with SKIP1, SKIP2, SKIP3, SKIP4, SKIP6, FIB1/SKIP7, SKIP8, PP2A11/SKIP10, SKIP11, PP2B11/SKIP12, PP2A14/SKIP13, SKIP14, SKIP15, SKIP16, SKIP19/FBL20, SKIP20, PP2B1/SKIP21, SKIP22, SKIP23, SKIP24, SKIP25, TULP10/SKIP26, SKIP27, SKIP28/MEE11, AFR/SKIP29, SKIP30, SKIP31, SKIP32/FBP7, SKIP33, SKIP35, ADO1/ZTL, ADO2/LKP2, ADO3/FKF1, AFR, COI1, DOR, EBF1, EBF2, EID1, ORE9, PP2A13/SKIP9, TIR1, UFO, SKP2A, CPR1/CPR30, FBL17, NUP58, At1g55000, At1g67340, At1g78100, At3g04660, At3g61590, At4g38940 and At5g49610. The SKP1A subunit of the SCF E3 ubiquitin ligase complex can interact directly with KIN10, KIN11 and the proteasome subunit PAD1. This interaction can be disrupted by PRL1. In case of polerovirus infection, part of a SCF P0 complex composed of the viral silencing suppressor P0, SKP1 and CUL1. Interacts with turnip yellows virus P0. Interacts with VBF and Agrobacterium virF. Binds to KIB1. In terms of tissue distribution, accumulates only in meristematic cells. Expressed in inflorescence, shoot and root apical meristems, as well as in developing organs such as gametocytes and seeds. Also detected in cortical layer and epidermis of roots, leaves, pith and vascular bundle of young stem, young floral buds and organ primordia, pollen and through the valve of siliques. Not detectable in mature root tissues.

The protein localises to the nucleus. Its subcellular location is the cytoplasm. It is found in the cytoskeleton. It localises to the spindle. The protein resides in the phragmoplast. It participates in protein modification; protein ubiquitination. Its function is as follows. Involved in ubiquitination and subsequent proteasomal degradation of target proteins. Together with CUL1, RBX1 and a F-box protein, it forms a SCF E3 ubiquitin ligase complex. The functional specificity of this complex depends on the type of F-box protein. In the SCF complex, it serves as an adapter that links the F-box protein to CUL1. SCF(UFO) is required for vegetative and floral organ development as well as for male gametogenesis. SCF(TIR1) is involved in auxin signaling pathway. SCF(COI1) regulates responses to jasmonates. SCF(EID1) and SCF(AFR) are implicated in phytochrome A light signaling. SCF(ADO1), SCF(ADO2), SCF(ADO3) are related to the circadian clock. SCF(ORE9) seems to be involved in senescence. SCF(EBF1/EBF2) may regulate ethylene signaling. Plays a role during embryogenesis and early postembryonic development, especially during cell elongation and division. Contributes to the correct chromosome segregation during tetrad formation. This Arabidopsis thaliana (Mouse-ear cress) protein is SKP1-like protein 1A.